The primary structure comprises 479 residues: Transcription factor CP2-like protein 1 (479 aa).

The segment at Met-1–Cys-52 is mediate transcriptional repression. A Grh/CP2 DB domain is found at Arg-43–Asn-280. Disordered regions lie at residues Lys-219 to Ser-248 and Trp-260 to Gly-301. Over residues Lys-221–Tyr-245 the composition is skewed to basic and acidic residues. Residues Pro-261–Arg-365 are SAM2-like domain. The segment covering Gln-266–Asn-292 has biased composition (polar residues).

Belongs to the grh/CP2 family. CP2 subfamily. In terms of assembly, forms homohexamers via its SAM-like domain. Interacts with Mta1; which is indispensable for Tfcp2l1-mediated self-renewal-promoting effect and endoderm-inhibiting action. As to expression, highly expressed in placenta, testis, small intestine, kidney and stomach. Low levels of expression in lung, mesenteric lymph nodes, muscle, ovary, and thymus. No expression was detected in brain, heart, liver, and spleen. Expressed in eccrine glands in the palm. Expression is prominent in both kidney collecting ducts intercalated (IC) and principal (PC) cells. Also expressed in the thick limb of Henle and connecting segments of the nephron.

The protein resides in the nucleus. Transcription factor that facilitates establishment and maintenance of pluripotency in embryonic stem cells (ESCs). With Klf2, acts as the major effector of self-renewal that mediates induction of pluripotency downstream of LIF/Stat3 and Wnt/beta-catenin signaling. Required for normal duct development in the salivary gland and kidney. Coordinates the development of the kidney collecting ducts intercalated (IC) and principal (PC) cells, which regulate acid-base and salt-water homeostasis, respectively. Regulates the expression of IC genes including subunits B1 and D2 of the V-ATPase complex, Oxgr1, Ca12, Slc4a1, Aqp6 and IC-specific transcription factor Foxi1. Also regulates the expression of Jag1 and subsequent notch signaling in the collecting duct. Jag1 initiates notch signaling in PCs but inhibits notch signaling in ICs. Acts as a transcriptional suppressor that may suppress UBP1-mediated transcriptional activation. Modulates the placental expression of CYP11A1. The polypeptide is Transcription factor CP2-like protein 1 (Tfcp2l1) (Mus musculus (Mouse)).